Here is a 116-residue protein sequence, read N- to C-terminus: Large ribosomal subunit protein bL17 (116 aa).

Belongs to the bacterial ribosomal protein bL17 family. As to quaternary structure, part of the 50S ribosomal subunit. Contacts protein L32.

The sequence is that of Large ribosomal subunit protein bL17 from Acaryochloris marina (strain MBIC 11017).